We begin with the raw amino-acid sequence, 543 residues long: Splicing factor U2af large subunit B (543 aa).

A compositionally biased stretch (gly residues) spans 1-10 (MADDNGGGGD). Residues 1–171 (MADDNGGGGD…IPTPSQLPGS (171 aa)) form a disordered region. Composition is skewed to basic and acidic residues over residues 17 to 78 (VRPE…DRDR) and 88 to 114 (EHRDRPDDHDRHRSRDSERRRDRERDG). The span at 115 to 126 (HRRHRSRSRSRS) shows a compositional bias: basic residues. RRM domains lie at 207-290 (RRVY…RPTD), 327-405 (DRIF…RANQ), and 446-532 (QVVT…YPEN).

Belongs to the splicing factor SR family.

Its subcellular location is the nucleus. Its function is as follows. Necessary for the splicing of pre-mRNA. The polypeptide is Splicing factor U2af large subunit B (U2AF65B) (Triticum aestivum (Wheat)).